We begin with the raw amino-acid sequence, 46 residues long: Homeobox protein Hox-D4 (46 aa).

The segment at residues 1 to 46 (VNSNYTGGEPKRSRTAYTRQQVLELEKEFLFNRYLTRRRRIQHTLT) is a DNA-binding region (homeobox).

The protein belongs to the Antp homeobox family. Deformed subfamily. In terms of assembly, forms a DNA-binding heterodimer with transcription factor PBX1.

The protein resides in the nucleus. Sequence-specific transcription factor which is part of a developmental regulatory system that provides cells with specific positional identities on the anterior-posterior axis. This is Homeobox protein Hox-D4 (HOXD4) from Ovis aries (Sheep).